Consider the following 397-residue polypeptide: Odorant receptor 98a (397 aa).

Residues 1–43 (MLFNYLRKPNPTNLLTSPDSFRYFEYGMFCMGWHTPATHKIIY) are Cytoplasmic-facing. Residues 44–64 (YITSCLIFAWCAVYLPIGIII) form a helical membrane-spanning segment. The Extracellular portion of the chain corresponds to 65 to 77 (SFKTDINTFTPNE). Residues 78-98 (LLTVMQLFFNSVGMPFKVLFF) form a helical membrane-spanning segment. Residues 99-138 (NLYISGFYKAKKLLSEMDKRCTTLKERVEVHQGVVRCNKA) are Cytoplasmic-facing. A helical transmembrane segment spans residues 139 to 159 (YLIYQFIYTAYTISTFLSAAL). Residues 160 to 192 (SGKLPWRIYNPFVDFRESRSSFWKAALNETALM) lie on the Extracellular side of the membrane. The N-linked (GlcNAc...) asparagine glycan is linked to Asn187. Residues 193-213 (LFAVTQTLMSDIYPLLYGLIL) traverse the membrane as a helical segment. The Cytoplasmic portion of the chain corresponds to 214-266 (RVHLKLLRLRVESLCTDSGKSDAENEQDLIKCIKDHNLIIDYAAAIRPAVTRT). The helical transmembrane segment at 267 to 287 (IFVQFLLIGICLGLSMINLLF) threads the bilayer. At 288–293 (FADIWT) the chain is on the extracellular side. A helical membrane pass occupies residues 294–314 (GLATVAYINGLMVQTFPFCFV). Residues 315–354 (CDLLKKDCELLVSAIFHSNWINSSRSYKSSLRYFLKNAQK) are Cytoplasmic-facing. Residues 355 to 375 (SIAFTAGSIFPISTGSNIKVA) form a helical membrane-spanning segment. The Extracellular portion of the chain corresponds to 376–397 (KLAFSVVTFVNQLNIADRLTKN).

The protein belongs to the insect chemoreceptor superfamily. Heteromeric odorant receptor channel (TC 1.A.69) family. Or2a subfamily. Interacts with Orco. Complexes exist early in the endomembrane system in olfactory sensory neurons (OSNs), coupling these complexes to the conserved ciliary trafficking pathway. Expressed in olfactory sensory neurons in the antenna.

It is found in the cell membrane. In terms of biological role, odorant receptor which mediates acceptance or avoidance behavior, depending on its substrates. The odorant receptor repertoire encodes a large collection of odor stimuli that vary widely in identity, intensity, and duration. May form a complex with Orco to form odorant-sensing units, providing sensitive and prolonged odorant signaling and calcium permeability. This chain is Odorant receptor 98a (Or98a), found in Drosophila melanogaster (Fruit fly).